Here is a 231-residue protein sequence, read N- to C-terminus: Uracil-DNA glycosylase (231 aa).

Residue Asp-70 is the Proton acceptor of the active site.

It belongs to the uracil-DNA glycosylase (UDG) superfamily. UNG family.

The protein resides in the cytoplasm. It carries out the reaction Hydrolyzes single-stranded DNA or mismatched double-stranded DNA and polynucleotides, releasing free uracil.. Its function is as follows. Excises uracil residues from the DNA which can arise as a result of misincorporation of dUMP residues by DNA polymerase or due to deamination of cytosine. The protein is Uracil-DNA glycosylase of Pseudomonas fluorescens (strain Pf0-1).